The sequence spans 285 residues: Tyrosine recombinase XerA (285 aa).

Positions Ile7–Gly84 constitute a Core-binding (CB) domain. Positions Ser100–Glu274 constitute a Tyr recombinase domain. Residues Arg135, Lys160, His226, Arg229, and His252 contribute to the active site. The active-site O-(3'-phospho-DNA)-tyrosine intermediate is the Tyr261.

The protein belongs to the 'phage' integrase family. XerA subfamily.

It localises to the cytoplasm. Functionally, site-specific tyrosine recombinase, which acts by catalyzing the cutting and rejoining of the recombining DNA molecules. The sequence is that of Tyrosine recombinase XerA from Pyrococcus horikoshii (strain ATCC 700860 / DSM 12428 / JCM 9974 / NBRC 100139 / OT-3).